We begin with the raw amino-acid sequence, 20 residues long: Maximin-Hu (20 aa).

This sequence belongs to the bombinin family. As to expression, expressed by the skin glands.

It localises to the secreted. In terms of biological role, has antimicrobial activity. This chain is Maximin-Hu, found in Bombina maxima (Giant fire-bellied toad).